The primary structure comprises 299 residues: Glutamyl-Q tRNA(Asp) synthetase (299 aa).

L-glutamate-binding positions include 18–22 (RFAPS) and Glu-54. The short motif at 21-31 (PSPSGALHFGS) is the 'HIGH' region element. Residues Cys-110, Cys-112, Tyr-124, and Cys-128 each contribute to the Zn(2+) site. 2 residues coordinate L-glutamate: Tyr-181 and Arg-199. The short motif at 237–241 (KLSKQ) is the 'KMSKS' region element. Position 240 (Lys-240) interacts with ATP.

It belongs to the class-I aminoacyl-tRNA synthetase family. GluQ subfamily. Zn(2+) is required as a cofactor.

In terms of biological role, catalyzes the tRNA-independent activation of glutamate in presence of ATP and the subsequent transfer of glutamate onto a tRNA(Asp). Glutamate is transferred on the 2-amino-5-(4,5-dihydroxy-2-cyclopenten-1-yl) moiety of the queuosine in the wobble position of the QUC anticodon. The chain is Glutamyl-Q tRNA(Asp) synthetase from Shewanella oneidensis (strain ATCC 700550 / JCM 31522 / CIP 106686 / LMG 19005 / NCIMB 14063 / MR-1).